We begin with the raw amino-acid sequence, 314 residues long: Chlorinase cctP2 (314 aa).

A compositionally biased stretch (basic and acidic residues) spans 1-14; sequence MEGKTSRYQDEAHD. Positions 1-24 are disordered; it reads MEGKTSRYQDEAHDSAGSFNEETE. Short sequence motifs (HXXHC) lie at residues 150 to 154 and 177 to 181; these read HALHC and HIEHC.

It belongs to the ustYa family.

The protein operates within mycotoxin biosynthesis. Chlorinase; part of the gene cluster that mediates the biosynthesis of the mycotoxin cyclochlorotine, a hepatotoxic and carcinogenic cyclic chlorinated pentapeptide. Within the pathway, cctP2 catalyzes the formation of isocyclochlorotine via dichlorination of the Pro from the isocyclotine skeleton. The NRPS cctN initially catalyzes the condensation of L-serine (Ser), Pro, L-2-aminobutyrate (2Abu), Ser, and beta-Phe in this order to produce isocyclotine. After the dichlorination of Pro2 catalyzed by cctP2 to produce isocyclochlorotine, the cctO-mediated transacylation of isocyclochlorotine can furnish cyclochlorotine. The subsequent hydroxylation of cyclochlorotine by cctR yields hydroxycyclochlorotine as the final product. CctP1 probably acts as a phenylalanine aminomutase and provides the uncommon building block beta-Phe. Furthermore, 2Abu can be synthesized from threonine by one of the threonine dehydratases and transaminases localized outside of the cluster. The functions of the remaining proteins encoded by the cluster, cctM and cctT, have not been identified yet. This is Chlorinase cctP2 from Talaromyces islandicus (Penicillium islandicum).